We begin with the raw amino-acid sequence, 538 residues long: Atos homolog protein B (538 aa).

Over residues 1 to 18 (MRHVQAEPSPSSEPEAGP) the composition is skewed to low complexity. 2 disordered regions span residues 1–114 (MRHV…LGVA) and 133–300 (TSSW…VLDP). Over residues 227 to 238 (HTPPGPGPPGPC) the composition is skewed to pro residues. Phosphoserine is present on residues Ser-254 and Ser-255. The segment at 348 to 430 (LLGNFEESLL…VPKVGTVQVT (83 aa)) is required for macropage invasion. The transactivation domain 1 (TAD1) stretch occupies residues 436 to 444 (QTVVKMFLV).

This sequence belongs to the ATOS family.

The protein resides in the nucleus. Its function is as follows. Transcription regulator that may syncronize transcriptional and translational programs. In Homo sapiens (Human), this protein is Atos homolog protein B.